A 388-amino-acid polypeptide reads, in one-letter code: Acyl-CoA dehydrogenase fadE12 (388 aa).

It belongs to the acyl-CoA dehydrogenase family. Requires FAD as cofactor.

It carries out the reaction a 2,3-saturated acyl-CoA + A = a 2,3-dehydroacyl-CoA + AH2. This is Acyl-CoA dehydrogenase fadE12 (fadE12) from Mycobacterium tuberculosis (strain CDC 1551 / Oshkosh).